The sequence spans 87 residues: Acylphosphatase (87 aa).

The Acylphosphatase-like domain occupies 2-87 (RLTALVSGHV…ETGLREFHIY (86 aa)). Catalysis depends on residues R17 and N35.

This sequence belongs to the acylphosphatase family.

It carries out the reaction an acyl phosphate + H2O = a carboxylate + phosphate + H(+). This is Acylphosphatase (acyP) from Deinococcus radiodurans (strain ATCC 13939 / DSM 20539 / JCM 16871 / CCUG 27074 / LMG 4051 / NBRC 15346 / NCIMB 9279 / VKM B-1422 / R1).